The chain runs to 502 residues: Probable malate:quinone oxidoreductase 1 (502 aa).

It belongs to the MQO family. FAD serves as cofactor.

The catalysed reaction is (S)-malate + a quinone = a quinol + oxaloacetate. It participates in carbohydrate metabolism; tricarboxylic acid cycle; oxaloacetate from (S)-malate (quinone route): step 1/1. The polypeptide is Probable malate:quinone oxidoreductase 1 (Pseudomonas putida (strain ATCC 47054 / DSM 6125 / CFBP 8728 / NCIMB 11950 / KT2440)).